A 132-amino-acid chain; its full sequence is NAD(P)H-quinone oxidoreductase subunit 3 (132 aa).

Transmembrane regions (helical) follow at residues 22-42, 76-96, and 101-121; these read FLGFLIICSLVPVLALAASAL, MFALVFVIFDVETVFLYPWAV, and LGLLAFIEALIFIAILVVALV.

This sequence belongs to the complex I subunit 3 family. As to quaternary structure, NDH-1 can be composed of about 15 different subunits; different subcomplexes with different compositions have been identified which probably have different functions.

It is found in the cellular thylakoid membrane. It carries out the reaction a plastoquinone + NADH + (n+1) H(+)(in) = a plastoquinol + NAD(+) + n H(+)(out). The catalysed reaction is a plastoquinone + NADPH + (n+1) H(+)(in) = a plastoquinol + NADP(+) + n H(+)(out). Functionally, NDH-1 shuttles electrons from an unknown electron donor, via FMN and iron-sulfur (Fe-S) centers, to quinones in the respiratory and/or the photosynthetic chain. The immediate electron acceptor for the enzyme in this species is believed to be plastoquinone. Couples the redox reaction to proton translocation, and thus conserves the redox energy in a proton gradient. Cyanobacterial NDH-1 also plays a role in inorganic carbon-concentration. The chain is NAD(P)H-quinone oxidoreductase subunit 3 (ndhC) from Thermosynechococcus vestitus (strain NIES-2133 / IAM M-273 / BP-1).